The chain runs to 262 residues: Ribosome-recycling factor, mitochondrial (262 aa).

A mitochondrion-targeting transit peptide spans 1–55 (MALGIRCFRLLHPAFSSYLADLSRPVSEVPMKTVRGRQRDHIQYSAHPAVPVRQF).

The protein belongs to the RRF family.

The protein resides in the mitochondrion. Functionally, responsible for the disassembly of ribosomes from messenger RNA at the termination of mitochondrial protein biosynthesis. Acts in collaboration with GFM2. Promotes mitochondrial ribosome recycling by dissolution of intersubunit contacts. This Rattus norvegicus (Rat) protein is Ribosome-recycling factor, mitochondrial (Mrrf).